Consider the following 1236-residue polypeptide: ESX-4 secretion system protein EccC4 (1236 aa).

Transmembrane regions (helical) follow at residues 32–52 (LLPV…FLPG) and 59–79 (PTFL…AVTG). FtsK domains are found at residues 407 to 607 (GTAV…SESR), 747 to 936 (RVPL…ADSE), and 1018 to 1201 (GQPV…DEGA). ATP contacts are provided by residues 430–437 (GATGSGKS), 765–772 (GAPQTGKS), and 1035–1042 (GDNECGKT).

In terms of assembly, part of the ESX-4 / type VII secretion system (T7SS), which is composed of cytosolic and membrane components.

The protein localises to the cell membrane. The chain is ESX-4 secretion system protein EccC4 (eccC4) from Mycobacterium tuberculosis (strain ATCC 25618 / H37Rv).